The following is a 382-amino-acid chain: MTVLIQGAGIAGLALAREFTKAGIDWLLVERASEIRPIGTGITLASNALTALSSTLDLDRLFRRGMPLAGINVYAHDGSMLMSMPSSLGGNSRGGLALQRHELHAALLEGLDESRIRVGVSIVQILDGLDHERVTLSDGTVHDCSLVVGADGIRSSVRRYVWPEATLRHSGETCWRLVVPHRLEDAELAGEVWGHGKRLGFIQISPREMYVYATLKVRREEPEDEEGFVTPQRLAAHYADFDGIGASIARLIPSATTLVHNDLEELAGASWCRGRVVLIGDAAHAMTPNLGQGAAMALEDAFLLARLWCLAPRAETLILFQQQREARIEFIRKQSWIVGRLGQWESPWSVWLRNTLVRLVPNASRRRLHQRLFTGVGEMAAQ.

This sequence belongs to the 3-hydroxybenzoate 6-hydroxylase family.

It carries out the reaction 2-heptyl-4(1H)-quinolone + NADH + O2 + H(+) = 2-heptyl-3-hydroxy-4(1H)-quinolone + NAD(+) + H2O. Involved in the terminal step of the biosynthesis of quinolone which in addition to serve as a potent signal for quorum sensing, chelates iron and promotes the formation of membrane vesicles (MVs). Catalyzes the hydroxylation of 2-heptyl-4-quinolone (C7-HHQ) to yield 2-heptyl-3-hydroxy-4-quinolone (PQS). The protein is 2-heptyl-3-hydroxy-4(1H)-quinolone synthase (pqsH) of Pseudomonas aeruginosa (strain ATCC 15692 / DSM 22644 / CIP 104116 / JCM 14847 / LMG 12228 / 1C / PRS 101 / PAO1).